Consider the following 153-residue polypeptide: UPF0756 membrane protein LCABL_15860 (153 aa).

The next 4 helical transmembrane spans lie at 4–24, 52–72, 85–105, and 115–135; these read WLFLLGILAIAIVGKNKSLII, WGVTVISAAIMVPIATGEIGF, WIAIGCGVLVAVLSAKGVGLL, and LVFGTIIGVVFLKGIAAGPVI.

Belongs to the UPF0756 family.

It is found in the cell membrane. The chain is UPF0756 membrane protein LCABL_15860 from Lacticaseibacillus casei (strain BL23) (Lactobacillus casei).